Here is a 343-residue protein sequence, read N- to C-terminus: Phosphate acyltransferase (343 aa).

It belongs to the PlsX family. In terms of assembly, homodimer. Probably interacts with PlsY.

The protein resides in the cytoplasm. The catalysed reaction is a fatty acyl-[ACP] + phosphate = an acyl phosphate + holo-[ACP]. The protein operates within lipid metabolism; phospholipid metabolism. Its function is as follows. Catalyzes the reversible formation of acyl-phosphate (acyl-PO(4)) from acyl-[acyl-carrier-protein] (acyl-ACP). This enzyme utilizes acyl-ACP as fatty acyl donor, but not acyl-CoA. In Acidovorax sp. (strain JS42), this protein is Phosphate acyltransferase.